The following is a 657-amino-acid chain: DVHSSDNAHKQHDVNHLLDKIYEPIKDEKLHNTAHTFNPVADTSIYGDDGAAAKTLMQKLNDHRLLEEHHWFSLFNTRQREELAMLFTVLNQCKEWDFLNNNAAFFRERMNEGEFVYALYVSVIHSKLGDGIVLPPLYQITPHMFTNSEVIDKAYSAKMTHKEGTFNMSFTGTQKNREQRVAYFGQDIGMNIHHVTWHMDFPFWWDDSYGYHLDRKGELFFWVHHQLTARFDAERFSNWMDPVDELHWDDIIHEGFAPHASYKYGGEFPTRPDNTHFKNVDGVARVRDMEITENRIRDAIAHGYITATDGHTIDIRQPNGIELLGDIIESSMYSSNPHYPGSLHNTAHGMLGRQGDPHGKFNMPPGVMEHFETATRDPSFFRLHKYMDNIFKEHTDSFPPYTHEDLEFPGVSVDNIAIEGHLTTFFDQFKYSLVNAVDSGENVEDVEIYANVHRLNHEEFTYDIEVRNHNEEDKFATVRIFLCPTEDNNGITLNLDEARWLCLELDKFWTKLGDGKNLIERSSKDSSVTVPDMPSFESLKKQADEAVNGGHDLDLSAYERSCGIPDRMLLPKSKPQGMEFNLYVAVTDGDKDTDGSHGDHDHHGTHAQCGIHGELYPDHRPLGYPLERRIPDDRVFDGVSNIKHALVKIVHDPELRA.

Residue Asn167 is glycosylated (N-linked (GlcNAc...) asparagine). Cu cation-binding residues include His194, His198, His224, His344, His348, and His384. Intrachain disulfides connect Cys483–Cys502 and Cys562–Cys609.

The protein belongs to the tyrosinase family. Hemocyanin subfamily. It consists of at least four very similar subunits. In terms of tissue distribution, hemolymph.

It is found in the secreted. The protein localises to the extracellular space. Functionally, hemocyanins are copper-containing oxygen carriers occurring freely dissolved in the hemolymph of many mollusks and arthropods. This chain is Hemocyanin, found in Palinurus vulgaris (European spiny lobster).